The following is a 388-amino-acid chain: Zinc finger CCCH domain-containing protein 47 (388 aa).

Disordered stretches follow at residues 1–130 (MADP…MAPL) and 144–282 (PLHE…TPSA). Composition is skewed to basic and acidic residues over residues 61–109 (AAND…KSEV) and 181–193 (PDNH…HLPR). The segment covering 260-274 (ASSSSSSSSAGQQGS) has biased composition (low complexity). C3H1-type zinc fingers lie at residues 321–348 (HHKI…HGEE) and 359–388 (GGGG…HGGV).

This chain is Zinc finger CCCH domain-containing protein 47, found in Oryza sativa subsp. japonica (Rice).